The following is a 323-amino-acid chain: uncharacterized protein (323 aa).

In terms of domain architecture, S4 RNA-binding spans 16–95 (QRIDQFCLKI…DKLKIIFEDE (80 aa)). Asp148 is a catalytic residue.

This sequence belongs to the pseudouridine synthase RluA family.

The enzyme catalyses a uridine in RNA = a pseudouridine in RNA. This is an uncharacterized protein from Mycoplasma genitalium (strain ATCC 33530 / DSM 19775 / NCTC 10195 / G37) (Mycoplasmoides genitalium).